The sequence spans 376 residues: uncharacterized protein (376 aa).

The region spanning 82–372 is the Peptidase M14 domain; that stretch reads KIYDDSAVEK…ATSGILWRAL (291 aa). Residues His-138, Glu-141, and His-283 each contribute to the Zn(2+) site. Glu-344 functions as the Proton donor/acceptor in the catalytic mechanism.

The protein belongs to the peptidase M14 family. Requires Zn(2+) as cofactor.

This is an uncharacterized protein from Bacillus subtilis (strain 168).